The primary structure comprises 307 residues: Fructokinase (307 aa).

It belongs to the carbohydrate kinase PfkB family.

The catalysed reaction is D-fructose + ATP = D-fructose 6-phosphate + ADP + H(+). The chain is Fructokinase (scrK) from Vibrio alginolyticus.